Reading from the N-terminus, the 649-residue chain is Serine/threonine-protein kinase par-4 (649 aa).

The span at 1-11 (MEGPSSSSVPT) shows a compositional bias: polar residues. A disordered region spans residues 1–132 (MEGPSSSSVP…DEEAETPEEQ (132 aa)). Positions 45–55 (NTEKMEKEKKP) are enriched in basic and acidic residues. Acidic residues-rich tracts occupy residues 64–77 (PDYD…GSCE) and 117–129 (DDME…AETP). The region spanning 197–460 (YLWGGIIGTG…ISDVMQHPWF (264 aa)) is the Protein kinase domain. Residues 203-211 (IGTGSYGKV) and Lys-226 contribute to the ATP site. Catalysis depends on Asp-324, which acts as the Proton acceptor. The disordered stretch occupies residues 548-649 (TLEKRPGDGP…CIFRSRTDSS (102 aa)). A compositionally biased stretch (low complexity) spans 597–609 (AVEVVEAVAAPEA).

It belongs to the protein kinase superfamily. CAMK Ser/Thr protein kinase family. LKB1 subfamily. Mg(2+) is required as a cofactor. Mn(2+) serves as cofactor.

It is found in the cytoplasm. It localises to the cell cortex. The catalysed reaction is L-seryl-[protein] + ATP = O-phospho-L-seryl-[protein] + ADP + H(+). It carries out the reaction L-threonyl-[protein] + ATP = O-phospho-L-threonyl-[protein] + ADP + H(+). Its function is as follows. Required for cytoplasmic partitioning and asymmetric cell division in early embryogenesis. Phosphorylates and restricts the asymmetry effectors mex-5 and mex-6 to the anterior cytoplasm of the zygote and maintains these phosphorylations until fertilization. Phosphorylates and regulates aak-2 in response to oxidative stress. May also play a role in motility, behavioral response, regulation of lifespan and dauer formation through this pathway. This is Serine/threonine-protein kinase par-4 from Caenorhabditis briggsae.